The primary structure comprises 432 residues: MIDSLDLVIDTVLAREVLDSRGNPTVEAEVLLEGGAIGRAIVPSGASTGAYEAHELRDAGDRYFGKGVLKVVENIEERIAPTICGLSASDQATIDGVMSELDGTENKSKLGANAILAVSIATARSAANGYGMPLYRYLGGPMASLLPVPLMNVINGGAHAANNLDFQEFMLVPHGANTFREALRMGAEVFHTLKQLLSEKGLSTAVGDEGGFAPNLQSNQAAGDLLVKSIEKAGFIPGEQISLALDVASTEFFKDGAYFFGGRNYSTEGMIEELVKLVNAYPIVSIEDGLAEDDWEGWGLLTKELGEKVQLVGDDLFVTNTSRLQRGINQKVANSILIKVNQIGSLTETLQAIDLANRSGYTSVISHRSGETEDTTIADLSVATRAGQIKTGSLSRSERVAKYNQLLRIEDELGSEATYAGSNDLGPLCGKK.

Residue Gln167 participates in (2R)-2-phosphoglycerate binding. Residue Glu209 is the Proton donor of the active site. The Mg(2+) site is built by Asp246, Glu287, and Asp314. Positions 339, 368, 369, and 390 each coordinate (2R)-2-phosphoglycerate. Lys339 serves as the catalytic Proton acceptor.

The protein belongs to the enolase family. Requires Mg(2+) as cofactor.

The protein resides in the cytoplasm. It is found in the secreted. The protein localises to the cell surface. The enzyme catalyses (2R)-2-phosphoglycerate = phosphoenolpyruvate + H2O. The protein operates within carbohydrate degradation; glycolysis; pyruvate from D-glyceraldehyde 3-phosphate: step 4/5. Its function is as follows. Catalyzes the reversible conversion of 2-phosphoglycerate (2-PG) into phosphoenolpyruvate (PEP). It is essential for the degradation of carbohydrates via glycolysis. This Prochlorococcus marinus (strain MIT 9211) protein is Enolase.